The following is a 451-amino-acid chain: Glutamyl-tRNA reductase (451 aa).

Substrate-binding positions include 49-52 (TCNR), serine 109, 114-116 (EQQ), and glutamine 120. The Nucleophile role is filled by cysteine 50. NADP(+) is bound at residue 190–195 (GAGAMG).

Belongs to the glutamyl-tRNA reductase family. As to quaternary structure, homodimer.

It carries out the reaction (S)-4-amino-5-oxopentanoate + tRNA(Glu) + NADP(+) = L-glutamyl-tRNA(Glu) + NADPH + H(+). It participates in porphyrin-containing compound metabolism; protoporphyrin-IX biosynthesis; 5-aminolevulinate from L-glutamyl-tRNA(Glu): step 1/2. Catalyzes the NADPH-dependent reduction of glutamyl-tRNA(Glu) to glutamate 1-semialdehyde (GSA). The protein is Glutamyl-tRNA reductase of Mycolicibacterium smegmatis (strain ATCC 700084 / mc(2)155) (Mycobacterium smegmatis).